We begin with the raw amino-acid sequence, 251 residues long: Outer membrane protein assembly factor BamD (251 aa).

The N-terminal stretch at 1 to 19 is a signal peptide; sequence MKLTKLLSALLVIGLVLGG. Cys-20 is lipidated: N-palmitoyl cysteine. Cys-20 carries the S-diacylglycerol cysteine lipid modification. TPR repeat units lie at residues 33–66, 70–103, and 166–199; these read IATL…HPGN, PQAE…HPAN, and AGKE…YQTT.

Belongs to the BamD family. In terms of assembly, part of the Bam complex.

The protein resides in the cell outer membrane. In terms of biological role, part of the outer membrane protein assembly complex, which is involved in assembly and insertion of beta-barrel proteins into the outer membrane. The protein is Outer membrane protein assembly factor BamD of Rickettsia prowazekii (strain Madrid E).